A 502-amino-acid polypeptide reads, in one-letter code: Pentatricopeptide repeat-containing protein At4g01990, mitochondrial (502 aa).

Residues 1–13 (MMHSVSRLARRFC) constitute a mitochondrion transit peptide. 7 PPR repeats span residues 139–173 (NQST…NHVS), 174–208 (NSLP…SITP), 209–243 (CDIT…GEGI), 245–275 (SWNT…LENN), 280–310 (VRDC…LKKR), 315–345 (NNSS…WEST), and 350–381 (DMRM…MKKC).

It belongs to the PPR family. P subfamily.

It is found in the mitochondrion. The chain is Pentatricopeptide repeat-containing protein At4g01990, mitochondrial from Arabidopsis thaliana (Mouse-ear cress).